The following is a 495-amino-acid chain: Lanosterol 14-alpha demethylase erg11 (495 aa).

The chain crosses the membrane as a helical span at residues 2–22 (AFSLVSILLSIALAWYVGYII). Residue Cys-442 coordinates heme.

This sequence belongs to the cytochrome P450 family. Interacts with dap1. The cofactor is heme.

It localises to the endoplasmic reticulum. The protein resides in the membrane. It carries out the reaction a 14alpha-methyl steroid + 3 reduced [NADPH--hemoprotein reductase] + 3 O2 = a Delta(14) steroid + formate + 3 oxidized [NADPH--hemoprotein reductase] + 4 H2O + 4 H(+). The enzyme catalyses a 14alpha-methyl steroid + reduced [NADPH--hemoprotein reductase] + O2 = a 14alpha-hydroxymethyl steroid + oxidized [NADPH--hemoprotein reductase] + H2O + H(+). The catalysed reaction is a 14alpha-hydroxymethyl steroid + reduced [NADPH--hemoprotein reductase] + O2 = a 14alpha-formyl steroid + oxidized [NADPH--hemoprotein reductase] + 2 H2O + H(+). It catalyses the reaction a 14alpha-formyl steroid + reduced [NADPH--hemoprotein reductase] + O2 = a Delta(14) steroid + formate + oxidized [NADPH--hemoprotein reductase] + H2O + 2 H(+). It carries out the reaction lanosterol + 3 reduced [NADPH--hemoprotein reductase] + 3 O2 = 4,4-dimethyl-5alpha-cholesta-8,14,24-trien-3beta-ol + formate + 3 oxidized [NADPH--hemoprotein reductase] + 4 H2O + 4 H(+). The enzyme catalyses lanosterol + reduced [NADPH--hemoprotein reductase] + O2 = 32-hydroxylanosterol + oxidized [NADPH--hemoprotein reductase] + H2O + H(+). The catalysed reaction is 32-hydroxylanosterol + reduced [NADPH--hemoprotein reductase] + O2 = 32-oxolanosterol + oxidized [NADPH--hemoprotein reductase] + 2 H2O + H(+). It catalyses the reaction 32-oxolanosterol + reduced [NADPH--hemoprotein reductase] + O2 = 4,4-dimethyl-5alpha-cholesta-8,14,24-trien-3beta-ol + formate + oxidized [NADPH--hemoprotein reductase] + H2O + 2 H(+). It carries out the reaction eburicol + 3 reduced [NADPH--hemoprotein reductase] + 3 O2 = 14-demethyleburicol + formate + 3 oxidized [NADPH--hemoprotein reductase] + 4 H2O + 4 H(+). The enzyme catalyses eburicol + reduced [NADPH--hemoprotein reductase] + O2 = 32-hydroxyeburicol + oxidized [NADPH--hemoprotein reductase] + H2O + H(+). The catalysed reaction is 32-hydroxyeburicol + reduced [NADPH--hemoprotein reductase] + O2 = 32-oxoeburicol + oxidized [NADPH--hemoprotein reductase] + 2 H2O + H(+). It catalyses the reaction 32-oxoeburicol + reduced [NADPH--hemoprotein reductase] + O2 = 14-demethyleburicol + formate + oxidized [NADPH--hemoprotein reductase] + H2O + 2 H(+). The protein operates within steroid biosynthesis; zymosterol biosynthesis; zymosterol from lanosterol: step 1/6. Its pathway is steroid metabolism; ergosterol biosynthesis. In terms of biological role, sterol 14alpha-demethylase that plays a critical role in the third module of ergosterol biosynthesis pathway, being ergosterol the major sterol component in fungal membranes that participates in a variety of functions. The third module or late pathway involves the ergosterol synthesis itself through consecutive reactions that mainly occur in the endoplasmic reticulum (ER) membrane. In filamentous fungi, during the initial step of this module, lanosterol (lanosta-8,24-dien-3beta-ol) can be metabolized to eburicol. Sterol 14alpha-demethylase catalyzes the three-step oxidative removal of the 14alpha-methyl group (C-32) of both these sterols in the form of formate, and converts eburicol and lanosterol to 14-demethyleburicol (4,4,24-trimethylergosta-8,14,24(28)-trienol) and 4,4-dimethyl-5alpha-cholesta-8,14,24-trien-3beta-ol, respectively, which are further metabolized by other enzymes in the pathway to ergosterol. Can also use substrates not intrinsic to fungi, such as 24,25-dihydrolanosterol (DHL), producing 4,4-dimethyl-8,14-cholestadien-3-beta-ol, but at lower rates than the endogenous substrates. This chain is Lanosterol 14-alpha demethylase erg11, found in Schizosaccharomyces pombe (strain 972 / ATCC 24843) (Fission yeast).